The chain runs to 350 residues: Neuronal-specific septin-3 (350 aa).

A compositionally biased stretch (basic and acidic residues) spans 1–10 (MSKGLPEART). Residues 1–29 (MSKGLPEARTDAAMSELVPEPRPKPAVPM) are disordered. A Septin-type G domain is found at 58 to 331 (TGFDFNIMVV…ETYRAKRLND (274 aa)). Residues 68–75 (GQSGLGKS) form a G1 motif region. Position 68–75 (68–75 (GQSGLGKS)) interacts with GTP. The residue at position 91 (serine 91) is a Phosphoserine. GTP is bound at residue threonine 102. The G3 motif stretch occupies residues 125–128 (DTPG). Residues 207-210 (AKAD) are G4 motif. GTP is bound by residues 208–216 (KADTMTLEE), glycine 265, and arginine 280. Positions 328-350 (RLNDNGGLPPVSVDTEESHDSNP) are disordered.

It belongs to the TRAFAC class TrmE-Era-EngA-EngB-Septin-like GTPase superfamily. Septin GTPase family. As to quaternary structure, septins polymerize into heterooligomeric protein complexes that form filaments, and can associate with cellular membranes, actin filaments and microtubules. GTPase activity is required for filament formation. In terms of processing, phosphorylated by PKG on serine residues. Phosphorylated by PKG on Ser-91. In terms of tissue distribution, expressed in the brain including the cerebrum, hippocampus and cerebellum (at protein level).

Its subcellular location is the cytoplasm. It is found in the cytoskeleton. The protein resides in the synapse. In terms of biological role, filament-forming cytoskeletal GTPase. May play a role in cytokinesis (Potential). This is Neuronal-specific septin-3 from Mus musculus (Mouse).